The sequence spans 117 residues: Large ribosomal subunit protein uL22 (117 aa).

It belongs to the universal ribosomal protein uL22 family. Part of the 50S ribosomal subunit.

Its function is as follows. This protein binds specifically to 23S rRNA; its binding is stimulated by other ribosomal proteins, e.g. L4, L17, and L20. It is important during the early stages of 50S assembly. It makes multiple contacts with different domains of the 23S rRNA in the assembled 50S subunit and ribosome. Functionally, the globular domain of the protein is located near the polypeptide exit tunnel on the outside of the subunit, while an extended beta-hairpin is found that lines the wall of the exit tunnel in the center of the 70S ribosome. The protein is Large ribosomal subunit protein uL22 of Staphylococcus epidermidis (strain ATCC 35984 / DSM 28319 / BCRC 17069 / CCUG 31568 / BM 3577 / RP62A).